An 885-amino-acid polypeptide reads, in one-letter code: Phycobiliprotein ApcE (885 aa).

C185 provides a ligand contact to (2R,3E)-phycocyanobilin. PBS-linker domains follow at residues 242 to 422 (DVQG…FRKV), 498 to 680 (KSIG…NSKK), and 694 to 871 (NSIQ…KQSS).

This sequence belongs to the phycobilisome linker protein family. In terms of processing, contains one covalently linked bilin chromophore. This protein autochromophorylates (Potential).

It localises to the plastid. Its subcellular location is the chloroplast thylakoid membrane. Functionally, this protein is postulated to act both as terminal energy acceptor and as a linker polypeptide that stabilizes the phycobilisome architecture. May have intrinsic bilin lyase activity. The polypeptide is Phycobiliprotein ApcE (apcE) (Aglaothamnion neglectum (Red alga)).